The chain runs to 365 residues: Glycerol dehydrogenase (365 aa).

Residues D37, G94, K95, T116, and S119 each contribute to the NAD(+) site. D121 contributes to the glycerol binding site. S125, L127, and Y131 together coordinate NAD(+). Zn(2+) is bound by residues D171, H254, and H271. Residue H254 participates in glycerol binding.

It belongs to the iron-containing alcohol dehydrogenase family. The cofactor is Zn(2+).

The catalysed reaction is glycerol + NAD(+) = dihydroxyacetone + NADH + H(+). It participates in polyol metabolism; glycerol fermentation; glycerone phosphate from glycerol (oxidative route): step 1/2. Its function is as follows. Catalyzes the NAD-dependent oxidation of glycerol to dihydroxyacetone (glycerone). Allows microorganisms to utilize glycerol as a source of carbon under anaerobic conditions. This is Glycerol dehydrogenase (gldA) from Pseudomonas putida (Arthrobacter siderocapsulatus).